The following is a 988-amino-acid chain: Isoleucine--tRNA ligase (988 aa).

The 'HIGH' region signature appears at 60 to 70 (PYANGALHMGH). Position 570 (Glu-570) interacts with L-isoleucyl-5'-AMP. A 'KMSKS' region motif is present at residues 611-615 (KMSKS). Lys-614 contributes to the ATP binding site. Residues Cys-957, Cys-960, Cys-977, and Cys-980 each contribute to the Zn(2+) site.

Belongs to the class-I aminoacyl-tRNA synthetase family. IleS type 1 subfamily. Monomer. Requires Zn(2+) as cofactor.

Its subcellular location is the cytoplasm. It carries out the reaction tRNA(Ile) + L-isoleucine + ATP = L-isoleucyl-tRNA(Ile) + AMP + diphosphate. In terms of biological role, catalyzes the attachment of isoleucine to tRNA(Ile). As IleRS can inadvertently accommodate and process structurally similar amino acids such as valine, to avoid such errors it has two additional distinct tRNA(Ile)-dependent editing activities. One activity is designated as 'pretransfer' editing and involves the hydrolysis of activated Val-AMP. The other activity is designated 'posttransfer' editing and involves deacylation of mischarged Val-tRNA(Ile). This chain is Isoleucine--tRNA ligase, found in Synechocystis sp. (strain ATCC 27184 / PCC 6803 / Kazusa).